Reading from the N-terminus, the 426-residue chain is Gamma-glutamyl phosphate reductase (426 aa).

This sequence belongs to the gamma-glutamyl phosphate reductase family.

Its subcellular location is the cytoplasm. It catalyses the reaction L-glutamate 5-semialdehyde + phosphate + NADP(+) = L-glutamyl 5-phosphate + NADPH + H(+). The protein operates within amino-acid biosynthesis; L-proline biosynthesis; L-glutamate 5-semialdehyde from L-glutamate: step 2/2. Functionally, catalyzes the NADPH-dependent reduction of L-glutamate 5-phosphate into L-glutamate 5-semialdehyde and phosphate. The product spontaneously undergoes cyclization to form 1-pyrroline-5-carboxylate. This is Gamma-glutamyl phosphate reductase from Acidovorax ebreus (strain TPSY) (Diaphorobacter sp. (strain TPSY)).